An 878-amino-acid chain; its full sequence is MTKFTTEEVRSKFITYFKANNHTHVPTSSLIPHNDPSLMFVNSGMVQFKNVFTGQEKRPYNKAVTSQKSLRAGGKHNDLENVGYTARHHTFFEMLGNFSFGDYFKEQAIYYAWNLLTKEFELPKDKLYATIYHTDDEAASYWKKIAGFGDDRIIKIKTNDNFWSMGDTGPCGPCSEIFYDHGEQIYGGLPGTKDEDGDRFIEIWNMVFMQYEQIDKDTSIELSQKSIDTGMGLERMTAVLQHVNNNYNIDLFQEIINFTENIVKVKVEGEAKFSYRVIADHLRASSFLIADGVIPSNEGRGYVLRRIMRRSMRHAHMLGAKEPLMYKLLPKLVDLMGNVYPELKRAERFISSILEQEEIRFKATLERGLKLLTEETEMLTKGNELSGEVAFKLYDTYGFPLDLTEDILKTRDISVDHKGFEEQMLMQKERARKSWLGSGESKTDQLWFDIKEQHGSTEFLGYTLNEAKCKIIALIKNNNLVNDIKEIDTQFLLISNQTPFYGESGGQIGDIGTIFAKDSEVEVIDTLKYLGSIIVHKCILKKGQINVGENANFSIDIRYRQNLRIHHSATHILHAVLHEVLGKHVTQKGSLVAPTYLRFDISHSKAVTNEEITLIEDKVNEIIRDNHEVNTTFMATEDAVKQGAMALFGEKYDSEVRVVKMGETSLELCAGTHVRRTGDIGCFKITSESAIAAGVRRIEAVCGEFVIKLMREKDSLLKSIESSLKTNKNELITKVNNILERNKEVEKELEKTHLASLDLSIEQIEKQAAQITGIKLLYKKVGNIDNKILRQAAENLTKKVEDLIMVYIAEGIGKLSITVAVSKAITDKYNADIIAKKLSLFLGGSGGGGQASLAQAGGNDIGKLTNIHKKLYSLLTVS.

4 residues coordinate Zn(2+): His567, His571, Cys669, and His673.

This sequence belongs to the class-II aminoacyl-tRNA synthetase family. Zn(2+) serves as cofactor.

Its subcellular location is the cytoplasm. It catalyses the reaction tRNA(Ala) + L-alanine + ATP = L-alanyl-tRNA(Ala) + AMP + diphosphate. Functionally, catalyzes the attachment of alanine to tRNA(Ala) in a two-step reaction: alanine is first activated by ATP to form Ala-AMP and then transferred to the acceptor end of tRNA(Ala). Also edits incorrectly charged Ser-tRNA(Ala) and Gly-tRNA(Ala) via its editing domain. This is Alanine--tRNA ligase from Rickettsia massiliae (strain Mtu5).